Here is a 171-residue protein sequence, read N- to C-terminus: Putative lipoprotein LppO (171 aa).

A signal peptide spans 1–28; sequence MTDPRHTVRIAVGATALGVSALGATLPA. The N-palmitoyl cysteine moiety is linked to residue Cys-29. The S-diacylglycerol cysteine moiety is linked to residue Cys-29.

The protein resides in the cell membrane. The sequence is that of Putative lipoprotein LppO (lppO) from Mycobacterium tuberculosis (strain CDC 1551 / Oshkosh).